Consider the following 37-residue polypeptide: MIEPLLFGIVLGLIPVTLVGLFVAAYLQYRRGNQFGL.

A helical transmembrane segment spans residues 5–25 (LLFGIVLGLIPVTLVGLFVAA).

This sequence belongs to the PetG family. The 4 large subunits of the cytochrome b6-f complex are cytochrome b6, subunit IV (17 kDa polypeptide, PetD), cytochrome f and the Rieske protein, while the 4 small subunits are PetG, PetL, PetM and PetN. The complex functions as a dimer.

It localises to the plastid. The protein localises to the chloroplast thylakoid membrane. Its function is as follows. Component of the cytochrome b6-f complex, which mediates electron transfer between photosystem II (PSII) and photosystem I (PSI), cyclic electron flow around PSI, and state transitions. PetG is required for either the stability or assembly of the cytochrome b6-f complex. This is Cytochrome b6-f complex subunit 5 from Rhodomonas salina (Cryptomonas salina).